Consider the following 420-residue polypeptide: Anaerobic glycerol-3-phosphate dehydrogenase subunit B (420 aa).

This sequence belongs to the anaerobic G-3-P dehydrogenase subunit B family. In terms of assembly, composed of a catalytic GlpA/B dimer and of membrane bound GlpC. FMN is required as a cofactor.

The catalysed reaction is a quinone + sn-glycerol 3-phosphate = dihydroxyacetone phosphate + a quinol. It functions in the pathway polyol metabolism; glycerol degradation via glycerol kinase pathway; glycerone phosphate from sn-glycerol 3-phosphate (anaerobic route): step 1/1. In terms of biological role, conversion of glycerol 3-phosphate to dihydroxyacetone. Uses fumarate or nitrate as electron acceptor. The protein is Anaerobic glycerol-3-phosphate dehydrogenase subunit B of Pectobacterium atrosepticum (strain SCRI 1043 / ATCC BAA-672) (Erwinia carotovora subsp. atroseptica).